The sequence spans 506 residues: Transcriptional coactivator YAP1 (506 aa).

Residues 1-38 are compositionally biased toward pro residues; sequence MDPGPPPPAAPPQAQGPPSAPPPPGQAPPSAPGPPAPP. The tract at residues 1–60 is disordered; it reads MDPGPPPPAAPPQAQGPPSAPPPPGQAPPSAPGPPAPPGSQAAPQAPPAGHQIVHVRGDS. The segment covering 39–50 has biased composition (low complexity); it reads GSQAAPQAPPAG. A Phosphoserine modification is found at serine 60. Phosphothreonine is present on threonine 62. The interval 90–112 is disordered; that stretch reads LPDSFFKPPEPKAHSRQASTDAG. Phosphoserine is present on residues serine 104 and serine 108. Phosphothreonine occurs at positions 109 and 118. Phosphoserine occurs at positions 126, 127, 130, and 137. The tract at residues 132–160 is disordered; that stretch reads QLGAVSPGTLTPTGVSSGPAAAPSAQHLR. Over residues 147 to 156 the composition is skewed to low complexity; it reads SSGPAAAPSA. Residue serine 163 is modified to Phosphoserine. WW domains lie at 170–204 and 230–263; these read VPLP…PRKA and PLPD…PRLD. 9 positions are modified to phosphoserine: serine 273, serine 288, serine 369, serine 373, serine 384, serine 390, serine 399, serine 402, and serine 405. 2 disordered regions span residues 274–307 and 356–416; these read QSAP…MRLQ and TLEQ…RTPD. The segment covering 279 to 289 has biased composition (pro residues); sequence KQPPPLAPQSP. The tract at residues 290–506 is transactivation domain; sequence PGVLGGGGSS…LDKESFLTWL (217 aa). Over residues 371–393 the composition is skewed to polar residues; sequence GMSQELRTMTTSGSDPFLNSGTY. Over residues 401–411 the composition is skewed to polar residues; that stretch reads DSGLSMSSYSV. Tyrosine 409 carries the phosphotyrosine modification. Phosphothreonine is present on threonine 414.

The protein belongs to the YAP1 family. Binds to the SH3 domain of the YES kinase. Binds to WBP1 and WBP2. Binds, in vitro, through the WW1 domain, to neural isoforms of ENAH that contain the PPSY motif. The phosphorylated form interacts with YWHAB. Interacts (via WW domains) with LATS1 (via PPxY motif 2). Interacts with LATS2. Interacts with TEAD1, TEAD2 and TEAD3. Interacts wih TEAD4. Interacts with TP73. Interacts with RUNX1. Interacts with HCK. Interacts (via WW domains) with PTPN14 (via PPxY motif 2); this interaction leads to the cytoplasmic sequestration of YAP1 and inhibits its transcriptional coactivator activity. Interacts (when phosphorylated at Ser-112) with SMAD2, SMAD3 and WWTR1. Interacts with PRRG2 (via cytoplasmic domain). Interacts (via WW domains) with PRRG4 (via cytoplasmic domain). Interacts (phosphorylated) with CLDN18; the interaction sequesters YAP1 away from the nucleus and thereby restricts transcription of YAP1 target genes. Interacts with SMAD1. Interacts with AMOT; the interaction facilitates translocation of YAP1 to the cytoplasm and tight junctions. Interacts with AMOTL2, the interaction is required for ubiquitination of AMOTL2 and localization of YAP1 to tight junctions. In terms of processing, phosphorylated by LATS1 and LATS2; leading to cytoplasmic translocation and inactivation. Phosphorylated by ABL1; leading to YAP1 stabilization, enhanced interaction with TP73 and recruitment onto proapoptotic genes; in response to DNA damage. Phosphorylation at Ser-402 and Ser-405 by CK1 is triggered by previous phosphorylation at Ser-399 by LATS proteins and leads to YAP1 ubiquitination by SCF(beta-TRCP) E3 ubiquitin ligase and subsequent degradation. Phosphorylated at Thr-118, Ser-137, Ser-369 and Thr-414 by MAPK8/JNK1 and MAPK9/JNK2, which is required for the regulation of apoptosis by YAP1. Phosphorylated in the nucleus by PRP4K; phosphorylation leads to nuclear exclusion. Ubiquitinated by SCF(beta-TRCP) E3 ubiquitin ligase.

Its subcellular location is the cytoplasm. It is found in the nucleus. The protein resides in the cell junction. It localises to the tight junction. Its function is as follows. Transcriptional regulator with dual roles as a coactivator and corepressor. Critical downstream regulatory target in the Hippo signaling pathway, crucial for organ size control and tumor suppression by restricting proliferation and promoting apoptosis. The Hippo signaling pathway core involves a kinase cascade featuring STK3/MST2 and STK4/MST1, along with its regulatory partner SAV1, which phosphorylates and activates LATS1/2 in complex with their regulatory protein, MOB1. This activation leads to the phosphorylation and inactivation of the YAP1 oncoprotein and WWTR1/TAZ. Phosphorylation of YAP1 by LATS1/2 prevents its nuclear translocation, thereby regulating the expression of its target genes. The transcriptional regulation of gene expression requires TEAD transcription factors and modulates cell growth, anchorage-independent growth, and induction of epithelial-mesenchymal transition (EMT). Plays a key role in tissue tension and 3D tissue shape by regulating the cortical actomyosin network, acting via ARHGAP18, a Rho GTPase activating protein that suppresses F-actin polymerization. It also suppresses ciliogenesis by acting as a transcriptional corepressor of TEAD4 target genes AURKA and PLK1. In conjunction with WWTR1, regulates TGFB1-dependent SMAD2 and SMAD3 nuclear accumulation. Synergizes with WBP2 to enhance PGR activity. This Canis lupus familiaris (Dog) protein is Transcriptional coactivator YAP1 (YAP1).